The sequence spans 286 residues: ATP synthase gamma chain (286 aa).

It belongs to the ATPase gamma chain family. As to quaternary structure, F-type ATPases have 2 components, CF(1) - the catalytic core - and CF(0) - the membrane proton channel. CF(1) has five subunits: alpha(3), beta(3), gamma(1), delta(1), epsilon(1). CF(0) has three main subunits: a, b and c.

It localises to the cell membrane. In terms of biological role, produces ATP from ADP in the presence of a proton gradient across the membrane. The gamma chain is believed to be important in regulating ATPase activity and the flow of protons through the CF(0) complex. The sequence is that of ATP synthase gamma chain from Bacillus cereus (strain G9842).